Consider the following 141-residue polypeptide: Large ribosomal subunit protein uL11 (141 aa).

This sequence belongs to the universal ribosomal protein uL11 family. Part of the ribosomal stalk of the 50S ribosomal subunit. Interacts with L10 and the large rRNA to form the base of the stalk. L10 forms an elongated spine to which L12 dimers bind in a sequential fashion forming a multimeric L10(L12)X complex. Post-translationally, one or more lysine residues are methylated.

In terms of biological role, forms part of the ribosomal stalk which helps the ribosome interact with GTP-bound translation factors. This chain is Large ribosomal subunit protein uL11, found in Prochlorococcus marinus (strain MIT 9312).